The sequence spans 537 residues: DNA-directed primase/polymerase protein (537 aa).

The stretch at 1-22 (MLRKWEARVKQIEERASHYERK) forms a coiled coil. Residues arginine 76, 114 to 116 (DLE), 165 to 169 (KFSRH), 270 to 273 (RNFR), and lysine 279 each bind substrate. Mn(2+) contacts are provided by aspartate 114 and glutamate 116. Zn(2+) is bound by residues cysteine 401, histidine 408, cysteine 428, and cysteine 433. A Zinc knuckle motif motif is present at residues 401-434 (CENIGRAHKSNNIMILVDLKNEVWYQKCHDPVCK). The segment at 462–481 (SGETDDTSTSLTKDSQTPPS) is disordered. Positions 462–536 (SGETDDTSTS…DELIIEALQN (75 aa)) are interaction with RPA1. Residues 468–478 (TSTSLTKDSQT) are compositionally biased toward low complexity. 2 short sequence motifs (RPA1-binding motif) span residues 494–507 (WDDE…EATE) and 524–532 (DIPDELIIE).

It belongs to the eukaryotic-type primase small subunit family. In terms of assembly, interacts with RPA1; leading to recruitment to chromatin and stimulate DNA primase activity. Interacts with SSBP1. Interacts with POLDIP2; leading to enhance DNA polymerase activity. It depends on Mn(2+) as a cofactor.

It is found in the nucleus. The protein localises to the mitochondrion matrix. The protein resides in the chromosome. It carries out the reaction ssDNA + n NTP = ssDNA/pppN(pN)n-1 hybrid + (n-1) diphosphate.. It catalyses the reaction DNA(n) + a 2'-deoxyribonucleoside 5'-triphosphate = DNA(n+1) + diphosphate. Its function is as follows. DNA primase and DNA polymerase required to tolerate replication-stalling lesions by bypassing them. Required to facilitate mitochondrial and nuclear replication fork progression by initiating de novo DNA synthesis using dNTPs and acting as an error-prone DNA polymerase able to bypass certain DNA lesions. Shows a high capacity to tolerate DNA damage lesions such as 8oxoG and abasic sites in DNA. Provides different translesion synthesis alternatives when DNA replication is stalled: able to synthesize DNA primers downstream of lesions, such as ultraviolet (UV) lesions, R-loops and G-quadruplexes, to allow DNA replication to continue. Can also realign primers ahead of 'unreadable lesions' such as abasic sites and 6-4 photoproduct (6-4 pyrimidine-pyrimidinone), thereby skipping the lesion. Repriming avoids fork degradation while leading to accumulation of internal ssDNA gaps behind the forks. Also able to incorporate nucleotides opposite DNA lesions such as 8oxoG, like a regular translesion synthesis DNA polymerase. Also required for reinitiating stalled forks after UV damage during nuclear DNA replication. Required for mitochondrial DNA (mtDNA) synthesis and replication, by reinitiating synthesis after UV damage or in the presence of chain-terminating nucleotides. Prevents APOBEC family-mediated DNA mutagenesis by repriming downstream of abasic site to prohibit error-prone translesion synthesis. Has non-overlapping function with POLH. In addition to its role in DNA damage response, also required to maintain efficient nuclear and mitochondrial DNA replication in unperturbed cells. The chain is DNA-directed primase/polymerase protein from Mus musculus (Mouse).